The primary structure comprises 101 residues: Putative UPF0377 protein YBL108W (101 aa).

Belongs to the UPF0377 family.

This chain is Putative UPF0377 protein YBL108W, found in Saccharomyces cerevisiae (strain ATCC 204508 / S288c) (Baker's yeast).